Reading from the N-terminus, the 486-residue chain is Outer dynein arm-docking complex subunit 4 (486 aa).

TPR repeat units lie at residues 14–47, 49–81, and 82–115; these read FTTYMAEGDQLFQRGEYVKAVESFTTALTLQPDD, NCLVSRSRCYVKLGDAENALKDAESSLKDNKNY, and FKGLYQKAEALYTMGDFEFALVYYHRGHKLRPEL. Positions 153-180 are disordered; that stretch reads GVHPQNLNPSNKKESKKHSKKTDKGEKT. 4 TPR repeats span residues 314-347, 354-387, 391-424, and 431-464; these read GNLHSYIGNALMDLGNMDRALHHHEKDLELAKKC, SRALDNIGRVYARIGKFQQAIEVWEKKLPLACGG, AWLFHEIGRCYLELKRYMEARDYGSRSLMAADDI, and LNASVLMAQAELKLSNYKASVLHFERALERAKLL.

Component of the outer dynein arm-docking complex along with ODAD1, ODAD2 and ODAD3.

Its subcellular location is the cytoplasm. It is found in the cytoskeleton. It localises to the cilium axoneme. Component of the outer dynein arm-docking complex (ODA-DC) that mediates outer dynein arms (ODA) binding onto the doublet microtubule. Plays an essential role for the assembly of ODA-DC and in the docking of ODA in ciliary axoneme. The chain is Outer dynein arm-docking complex subunit 4 (odad4) from Danio rerio (Zebrafish).